A 335-amino-acid chain; its full sequence is Flagellar P-ring protein (335 aa).

An N-terminal signal peptide occupies residues M1–A24.

This sequence belongs to the FlgI family. As to quaternary structure, the basal body constitutes a major portion of the flagellar organelle and consists of four rings (L,P,S, and M) mounted on a central rod.

It is found in the periplasm. It localises to the bacterial flagellum basal body. In terms of biological role, assembles around the rod to form the L-ring and probably protects the motor/basal body from shearing forces during rotation. The protein is Flagellar P-ring protein of Bdellovibrio bacteriovorus (strain ATCC 15356 / DSM 50701 / NCIMB 9529 / HD100).